The sequence spans 418 residues: Histidine--tRNA ligase (418 aa).

The protein belongs to the class-II aminoacyl-tRNA synthetase family.

It localises to the cytoplasm. It carries out the reaction tRNA(His) + L-histidine + ATP = L-histidyl-tRNA(His) + AMP + diphosphate + H(+). The polypeptide is Histidine--tRNA ligase (Methanococcus aeolicus (strain ATCC BAA-1280 / DSM 17508 / OCM 812 / Nankai-3)).